A 412-amino-acid polypeptide reads, in one-letter code: MNAEIIAVGTELLLGQITNTNAKFLSEKLASIGINVYYHTVVGDNTRRLQEAIRTAEKRANILIFTGGLGPTKDDLTKETIASIVKEDLVYDEAALTSIREYFNRTGREFTENNKKQALVLKGSTVFANNHGMAPGMGLHKNEKVYILLPGPPKEMQPMYNSYVDPFLRNVTTGEHIYSRVLRFFGIGESQLEVKVQDLIDNQTNPTIAPLASDGEVTLRLTAKHQNVEQAELLIQQVEHLILERVGEFFYGYNEDFLHHKAIELLKKKGFTLACAESLTGGLFGNQVTENAGVSSVFKGGVICYHNDVKQHILQVPEETLQTAGAVSEECARYLAENVKLLLQSDIGISFTGVAGPDASENKEPGTVFIGLAIKDEPTIVFPLCLSGSRQQIRERTVKYGFYHLYKKLEEM.

It belongs to the CinA family.

The sequence is that of Putative competence-damage inducible protein from Bacillus cytotoxicus (strain DSM 22905 / CIP 110041 / 391-98 / NVH 391-98).